Consider the following 210-residue polypeptide: Guanylate kinase (210 aa).

The region spanning 5 to 183 (GILFVISAPS…AVEEFKSIIL (179 aa)) is the Guanylate kinase-like domain. Position 12 to 19 (12 to 19 (APSGAGKT)) interacts with ATP.

This sequence belongs to the guanylate kinase family.

It is found in the cytoplasm. It catalyses the reaction GMP + ATP = GDP + ADP. Its function is as follows. Essential for recycling GMP and indirectly, cGMP. This is Guanylate kinase from Syntrophotalea carbinolica (strain DSM 2380 / NBRC 103641 / GraBd1) (Pelobacter carbinolicus).